A 322-amino-acid polypeptide reads, in one-letter code: RNA pseudouridine synthase 1 (322 aa).

Residue Asp-120 is part of the active site.

This sequence belongs to the pseudouridine synthase RluA family.

It catalyses the reaction a uridine in RNA = a pseudouridine in RNA. This is RNA pseudouridine synthase 1 from Arabidopsis thaliana (Mouse-ear cress).